Here is a 276-residue protein sequence, read N- to C-terminus: Hydroxyethylthiazole kinase (276 aa).

Residues arginine 126 and serine 172 each coordinate ATP. Glycine 199 serves as a coordination point for substrate.

This sequence belongs to the Thz kinase family. Mg(2+) serves as cofactor.

The enzyme catalyses 5-(2-hydroxyethyl)-4-methylthiazole + ATP = 4-methyl-5-(2-phosphooxyethyl)-thiazole + ADP + H(+). The protein operates within cofactor biosynthesis; thiamine diphosphate biosynthesis; 4-methyl-5-(2-phosphoethyl)-thiazole from 5-(2-hydroxyethyl)-4-methylthiazole: step 1/1. In terms of biological role, catalyzes the phosphorylation of the hydroxyl group of 4-methyl-5-beta-hydroxyethylthiazole (THZ). This chain is Hydroxyethylthiazole kinase, found in Burkholderia pseudomallei (strain 1710b).